Here is a 555-residue protein sequence, read N- to C-terminus: Formate--tetrahydrofolate ligase (555 aa).

Position 65-72 (65-72 (TPAGEGKT)) interacts with ATP.

The protein belongs to the formate--tetrahydrofolate ligase family.

The enzyme catalyses (6S)-5,6,7,8-tetrahydrofolate + formate + ATP = (6R)-10-formyltetrahydrofolate + ADP + phosphate. Its pathway is one-carbon metabolism; tetrahydrofolate interconversion. In Thermoanaerobacter pseudethanolicus (strain ATCC 33223 / 39E) (Clostridium thermohydrosulfuricum), this protein is Formate--tetrahydrofolate ligase.